Consider the following 295-residue polypeptide: Glutamyl-Q tRNA(Asp) synthetase (295 aa).

Residues R5–S9 and E41 each bind L-glutamate. The 'HIGH' region signature appears at P8–S18. Positions 97, 99, 117, and 121 each coordinate Zn(2+). L-glutamate is bound by residues Y178 and R196. The short motif at K234 to Q238 is the 'KMSKS' region element. K237 is a binding site for ATP.

It belongs to the class-I aminoacyl-tRNA synthetase family. GluQ subfamily. Zn(2+) serves as cofactor.

Its function is as follows. Catalyzes the tRNA-independent activation of glutamate in presence of ATP and the subsequent transfer of glutamate onto a tRNA(Asp). Glutamate is transferred on the 2-amino-5-(4,5-dihydroxy-2-cyclopenten-1-yl) moiety of the queuosine in the wobble position of the QUC anticodon. In Neisseria meningitidis serogroup B (strain ATCC BAA-335 / MC58), this protein is Glutamyl-Q tRNA(Asp) synthetase.